A 241-amino-acid polypeptide reads, in one-letter code: 1-(5-phosphoribosyl)-5-[(5-phosphoribosylamino)methylideneamino] imidazole-4-carboxamide isomerase (241 aa).

The active-site Proton acceptor is the D8. Catalysis depends on D129, which acts as the Proton donor.

Belongs to the HisA/HisF family.

The protein localises to the cytoplasm. The catalysed reaction is 1-(5-phospho-beta-D-ribosyl)-5-[(5-phospho-beta-D-ribosylamino)methylideneamino]imidazole-4-carboxamide = 5-[(5-phospho-1-deoxy-D-ribulos-1-ylimino)methylamino]-1-(5-phospho-beta-D-ribosyl)imidazole-4-carboxamide. The protein operates within amino-acid biosynthesis; L-histidine biosynthesis; L-histidine from 5-phospho-alpha-D-ribose 1-diphosphate: step 4/9. The sequence is that of 1-(5-phosphoribosyl)-5-[(5-phosphoribosylamino)methylideneamino] imidazole-4-carboxamide isomerase from Chloroflexus aggregans (strain MD-66 / DSM 9485).